A 410-amino-acid polypeptide reads, in one-letter code: Squalene synthase 1 (410 aa).

At G2 the chain carries N-acetylglycine. The next 2 helical transmembrane spans lie at 283 to 303 and 387 to 407; these read SIFR…ALCY and QPNS…FAYL.

This sequence belongs to the phytoene/squalene synthase family. The cofactor is Mg(2+). Mn(2+) serves as cofactor. In terms of tissue distribution, expressed in all tissues analyzed (seedlings, cotyledons, inflorescences, siliques, leaves, stems and roots). Highly expressed in roots and pollen.

It is found in the endoplasmic reticulum membrane. It catalyses the reaction 2 (2E,6E)-farnesyl diphosphate + NADPH + H(+) = squalene + 2 diphosphate + NADP(+). It carries out the reaction 2 (2E,6E)-farnesyl diphosphate + NADH + H(+) = squalene + 2 diphosphate + NAD(+). Its pathway is terpene metabolism; lanosterol biosynthesis; lanosterol from farnesyl diphosphate: step 1/3. This chain is Squalene synthase 1, found in Arabidopsis thaliana (Mouse-ear cress).